We begin with the raw amino-acid sequence, 479 residues long: Deoxyribodipyrimidine photo-lyase (479 aa).

The Photolyase/cryptochrome alpha/beta domain occupies serine 6 to leucine 137. FAD is bound at residue tyrosine 229. Arginine 233 provides a ligand contact to DNA. FAD-binding positions include threonine 241–serine 245 and glutamate 278–tyrosine 285. Interaction with DNA stretches follow at residues glutamate 278–tyrosine 285 and asparagine 344–arginine 345. Aspartate 375 to aspartate 377 provides a ligand contact to FAD. DNA is bound at residue glutamine 407.

Belongs to the DNA photolyase class-1 family. As to quaternary structure, monomer. It depends on FAD as a cofactor. Requires (6R)-5,10-methylene-5,6,7,8-tetrahydrofolate as cofactor.

The catalysed reaction is cyclobutadipyrimidine (in DNA) = 2 pyrimidine residues (in DNA).. In terms of biological role, involved in repair of UV radiation-induced DNA damage. Catalyzes the light-dependent monomerization (300-600 nm) of cyclobutyl pyrimidine dimers (in cis-syn configuration), which are formed between adjacent bases on the same DNA strand upon exposure to ultraviolet radiation. In Alkalihalophilus pseudofirmus (strain ATCC BAA-2126 / JCM 17055 / OF4) (Bacillus pseudofirmus), this protein is Deoxyribodipyrimidine photo-lyase (phr).